The following is a 206-amino-acid chain: Dephospho-CoA kinase (206 aa).

The DPCK domain maps to 4-200 (IVALTGGIGS…AYYLQLASQF (197 aa)). 12–17 (GSGKST) serves as a coordination point for ATP.

Belongs to the CoaE family.

The protein localises to the cytoplasm. The catalysed reaction is 3'-dephospho-CoA + ATP = ADP + CoA + H(+). It participates in cofactor biosynthesis; coenzyme A biosynthesis; CoA from (R)-pantothenate: step 5/5. Functionally, catalyzes the phosphorylation of the 3'-hydroxyl group of dephosphocoenzyme A to form coenzyme A. This Escherichia coli O6:H1 (strain CFT073 / ATCC 700928 / UPEC) protein is Dephospho-CoA kinase.